The sequence spans 1052 residues: SE-cephalotoxin (1052 aa).

An N-terminal signal peptide occupies residues 1–21; that stretch reads MMGTSRCVILLFALLLWAANA. The propeptide occupies 22 to 29; it reads APPEIHTT. N41 is a glycosylation site (N-linked (GlcNAc...) asparagine). Positions 130 to 194 form a coiled coil; that stretch reads TGVNRKLDQI…DMNKRRLMAE (65 aa). Residue N353 is glycosylated (N-linked (GlcNAc...) asparagine). Residues 460–497 form the EGF-like domain; it reads PGNPCNHGCNGHGECKVVPYTDQFQCFCHGNYEGKMCQ. Disulfide bonds link C464/C474, C468/C485, and C487/C496. 2 N-linked (GlcNAc...) asparagine glycosylation sites follow: N576 and N715. Residues 709-769 form the Sushi domain; sequence TSCPPLNVTH…QWSATPKCES (61 aa). 7 disulfides stabilise this stretch: C711–C752, C739–C767, C780–C814, C784–C820, C795–C804, C829–C847, and C841–C858. A TSP type-1 domain is found at 768–821; that stretch reads ESSWSRWSKWSACASTCGNATQSRRRRCLGQSESEKCIGPSKQVRKCFVEDCCQ. N786 is a glycosylation site (N-linked (GlcNAc...) asparagine). Residues 819-859 enclose the LDL-receptor class A domain; the sequence is CCQEKYGKFKCDNNKCISLSRVCDGNDDCRNAEDESKSRCK.

In terms of assembly, monomer. As to expression, expressed by the salivary gland.

It localises to the secreted. In Acanthosepion esculentum (Golden cuttlefish), this protein is SE-cephalotoxin.